The primary structure comprises 146 residues: Large ribosomal subunit protein uL15 (146 aa).

Positions M1–P10 are enriched in basic and acidic residues. The interval M1 to A41 is disordered.

Belongs to the universal ribosomal protein uL15 family. Part of the 50S ribosomal subunit.

Binds to the 23S rRNA. The sequence is that of Large ribosomal subunit protein uL15 from Mycobacterium bovis (strain BCG / Pasteur 1173P2).